Here is a 1876-residue protein sequence, read N- to C-terminus: 1,3-beta-glucan synthase component FKS1 (1876 aa).

Composition is skewed to polar residues over residues 1-25 (MNTDQQPYQGQTDYTQGPGNGQSQE) and 60-71 (QPPNESYDQDYT). Residues 1 to 108 (MNTDQQPYQG…PGTPGYDSYG (108 aa)) form a disordered region. The Cytoplasmic segment spans residues 1–454 (MNTDQQPYQG…WLHLVTNFNR (454 aa)). Lys259 is covalently cross-linked (Glycyl lysine isopeptide (Lys-Gly) (interchain with G-Cter in ubiquitin)). Thr269 and Thr272 each carry phosphothreonine. Glycyl lysine isopeptide (Lys-Gly) (interchain with G-Cter in ubiquitin) cross-links involve residues Lys275 and Lys386. A helical membrane pass occupies residues 455 to 475 (IWVMHISIFWMYFAYNSPTFY). The Extracellular portion of the chain corresponds to 476–492 (THNYQQLVDNQPLAAYK). A helical membrane pass occupies residues 493–513 (WASCALGGTVASLIQIVATLC). At 514–531 (EWSFVPRKWAGAQHLSRR) the chain is on the cytoplasmic side. The helical transmembrane segment at 532 to 552 (FWFLCIIFGINLGPIIFVFAY) threads the bilayer. Topologically, residues 553–563 (DKDTVYSTAAH) are extracellular. A helical membrane pass occupies residues 564-584 (VVAAVMFFVAVATIIFFSIMP). Over 585-621 (LGGLFTSYMKKSTRRYVASQTFTAAFAPLHGLDRWMS) the chain is Cytoplasmic. The chain crosses the membrane as a helical span at residues 622–642 (YLVWVTVFAAKYSESYYFLVL). Residues 643–678 (SLRDPIRILSTTAMRCTGEYWWGAVLCKVQPKIVLG) are Extracellular-facing. The chain crosses the membrane as a helical span at residues 679–699 (LVIATDFILFFLDTYLWYIIV). The Cytoplasmic portion of the chain corresponds to 700 to 1358 (NTIFSVGKSF…QPAVDWVRRY (659 aa)). Glycyl lysine isopeptide (Lys-Gly) (interchain with G-Cter in ubiquitin) cross-links involve residues Lys910 and Lys915. Residues 1359–1379 (TLSIFIVFWIAFVPIVVQELI) form a helical membrane-spanning segment. The Extracellular portion of the chain corresponds to 1380 to 1444 (ERGLWKATQR…RIPFSILYSR (65 aa)). Residues 1445-1465 (FAGSAIYMGARSMLMLLFGTV) traverse the membrane as a helical segment. At 1466 to 1469 (AHWQ) the chain is on the cytoplasmic side. A helical membrane pass occupies residues 1470–1490 (APLLWFWASLSSLIFAPFVFN). The Extracellular segment spans residues 1491–1560 (PHQFAWEDFF…DASRAHRTNL (70 aa)). Residues Lys1539 and Lys1547 each participate in a glycyl lysine isopeptide (Lys-Gly) (interchain with G-Cter in ubiquitin) cross-link. A helical transmembrane segment spans residues 1561 to 1581 (IMAEIIPCAIYAAGCFIAFTF). At 1582–1601 (INAQTGVKTTDDDRVNSVLR) the chain is on the cytoplasmic side. Residues 1602–1622 (IIICTLAPIAVNLGVLFFCMG) form a helical membrane-spanning segment. The Extracellular portion of the chain corresponds to 1623-1643 (MSCCSGPLFGMCCKKTGSVMA). A helical transmembrane segment spans residues 1644 to 1664 (GIAHGVAVIVHIAFFIVMWVL). At 1665–1672 (ESFNFVRM) the chain is on the cytoplasmic side. The helical transmembrane segment at 1673–1695 (LIGVVTCIQCQRLIFHCMTALML) threads the bilayer. The Extracellular portion of the chain corresponds to 1696–1802 (TREFKNDHAN…RKRMVKKYCS (107 aa)). A helical membrane pass occupies residues 1803–1823 (LYFLVLAIFAGCIIGPAVASA). Topologically, residues 1824-1876 (KIHKHIGDSLDGVVHNLFQPINTTNNDTGSQMSTYQSHYYTHTPSLKTWSTIK) are cytoplasmic.

The protein belongs to the glycosyltransferase 48 family. Component of the 1,3-beta-glucan synthase (GS) complex, composed of two alternate catalytic subunits FKS1 or GSC2, and a regulatory subunit RHO1. Interacts with RHO1, which is a GTP-binding protein.

It localises to the mitochondrion. It is found in the cell membrane. It carries out the reaction [(1-&gt;3)-beta-D-glucosyl](n) + UDP-alpha-D-glucose = [(1-&gt;3)-beta-D-glucosyl](n+1) + UDP + H(+). Functionally, alternate catalytic subunit of the 1,3-beta-glucan synthase (GS) complex. Synthesizes 1,3-beta-glucan, a major structural component of the yeast cell wall. Involved in cell wall synthesis, maintenance and remodeling. In Saccharomyces cerevisiae (strain ATCC 204508 / S288c) (Baker's yeast), this protein is 1,3-beta-glucan synthase component FKS1 (FKS1).